Here is a 552-residue protein sequence, read N- to C-terminus: E3 ubiquitin-protein ligase MGRN1 (552 aa).

The N-myristoyl glycine moiety is linked to residue glycine 2. The RING-type zinc finger occupies 278 to 317 (CVVCLSDLRDTLILPCRHLCLCTSCADTLRYQANNCPICR). The tract at residues 355 to 384 (SCPFKKSKPHPASLASKKPKRETNSDSVPP) is disordered. A Required for TSG101-binding motif is present at residues 406–409 (PSAP). Tyrosine 411 bears the Phosphotyrosine mark. Positions 439–552 (SSRQKGRPQS…PDSCSVGIDE (114 aa)) are disordered. Over residues 450–460 (APDSTLRSPSS) the composition is skewed to polar residues. Acidic residues predominate over residues 464–475 (EEDEEKLSEDVD). Serine 471 is subject to Phosphoserine. The span at 504–523 (SSSPQQGTRAASIENVLQDS) shows a compositional bias: polar residues. Phosphoserine is present on serine 524.

As to quaternary structure, interacts with MC1R and MC4R, but not with TBXA2R. Interacts with TSG101. Interacts with mislocalized cytosolically exposed PRNP; this interaction alters MGRN1 subcellular location and causes lysosomal enlargement. Autoubiquitinated in vitro.

It localises to the early endosome. It is found in the cytoplasm. Its subcellular location is the cytosol. The protein resides in the nucleus. The protein localises to the cell membrane. The enzyme catalyses S-ubiquitinyl-[E2 ubiquitin-conjugating enzyme]-L-cysteine + [acceptor protein]-L-lysine = [E2 ubiquitin-conjugating enzyme]-L-cysteine + N(6)-ubiquitinyl-[acceptor protein]-L-lysine.. The protein operates within protein modification; protein ubiquitination. In terms of biological role, E3 ubiquitin-protein ligase. Mediates monoubiquitination at multiple sites of TSG101 in the presence of UBE2D1, but not of UBE2G1, nor UBE2H. Plays a role in the regulation of endosome-to-lysosome trafficking. Impairs MC1R- and MC4R-signaling by competing with GNAS-binding to MCRs and inhibiting agonist-induced cAMP production. Does not inhibit ADRB2-signaling. Does not promote MC1R ubiquitination. Acts also as a negative regulator of hedgehog signaling. This is E3 ubiquitin-protein ligase MGRN1 (MGRN1) from Homo sapiens (Human).